The chain runs to 532 residues: MARGEGAEQFSSGLLPTAKSVTQNEIKMVKLPKQQERKRALTVWSKVCFAIGGAPYQITGTALGFFLQIFLLDVAQLNPLNASVILFVGRAWDAVTDPTVGFLVSRTPWTRHGRMMPWILVSTIPAVLCYFLIWVVPPIEQGKMMWYLLFYCLFQTLQTCFHVPYSALTMFISTEQRERDSATAYRMTVEVFGTVVGTAIQGQIVGMANTPCKNNTSPNNSSNDLIQSNNSHIPLKSNIFDERCAYMIASAVISLIYVVCAAVLFFGVREQDVQGELKAQKRVSFQKGLRLVMGHGPYVKLVLAFLFTSLAFMLLEGNFAVFIKYTLGFREDFQNILLVIMVSATVSIPMWQWFLCRFGKKTAVYIGITWAVPFMILVVSVNSSLIVSYIVSIAAGVSVGAAFLLPWSMLPDVVDDFKLQNPTSQGHEAIFYSFYVFFTKFASGVSLGVSTLALSFAGYETGVCVQSDSVNLTLKLLVSAAPVSLIALGLLIFMTYPIDEERREYNNKQLQLLLRNEEEEDEMEVLKPDITA.

The Cytoplasmic portion of the chain corresponds to M1–A40. Residues L41–F70 form a helical membrane-spanning segment. Residues L71 to N81 lie on the Extracellular side of the membrane. Residues A82–F102 traverse the membrane as a helical segment. Over L103–R114 the chain is Cytoplasmic. Residues M115 to W134 traverse the membrane as a helical segment. Residues V135–M144 are Extracellular-facing. A helical membrane pass occupies residues M145–T169. The Cytoplasmic segment spans residues M170 to Q176. The helical transmembrane segment at R177–A208 threads the bilayer. The Extracellular segment spans residues N209 to H232. C212 and C464 are joined by a disulfide. N-linked (GlcNAc...) asparagine glycans are attached at residues N214, N220, and N229. A helical membrane pass occupies residues I233–F266. Residues G267–P297 lie on the Cytoplasmic side of the membrane. A helical transmembrane segment spans residues Y298–K324. The Extracellular portion of the chain corresponds to Y325–N335. A helical membrane pass occupies residues I336–F354. The Cytoplasmic segment spans residues L355–F358. A helical transmembrane segment spans residues G359–S380. The Extracellular segment spans residues V381 to S383. A helical membrane pass occupies residues S384–Q420. Residues N421–I430 lie on the Cytoplasmic side of the membrane. Residues F431 to A457 form a helical membrane-spanning segment. Topologically, residues G458–S469 are extracellular. The helical transmembrane segment at V470–F493 threads the bilayer. At M494–A532 the chain is on the cytoplasmic side.

Belongs to the major facilitator superfamily. As to expression, expressed in the developing nervous system.

The protein resides in the cell membrane. The protein localises to the endoplasmic reticulum membrane. The catalysed reaction is a 1-acyl-sn-glycero-3-phosphocholine(in) + Na(+)(in) = a 1-acyl-sn-glycero-3-phosphocholine(out) + Na(+)(out). The enzyme catalyses 1-(4Z,7Z,10Z,13Z,16Z,19Z-docosahexaenoyl)-sn-glycero-3-phosphocholine(in) + Na(+)(in) = 1-(4Z,7Z,10Z,13Z,16Z,19Z-docosahexaenoyl)-sn-glycero-3-phosphocholine(out) + Na(+)(out). It carries out the reaction 1-(9Z-octadecenoyl)-sn-glycero-3-phosphocholine(in) + Na(+)(in) = 1-(9Z-octadecenoyl)-sn-glycero-3-phosphocholine(out) + Na(+)(out). It catalyses the reaction 1-hexadecanoyl-sn-glycero-3-phosphocholine(in) + Na(+)(in) = 1-hexadecanoyl-sn-glycero-3-phosphocholine(out) + Na(+)(out). The catalysed reaction is a 1-acyl-sn-glycero-3-phosphoethanolamine(in) + Na(+)(in) = a 1-acyl-sn-glycero-3-phosphoethanolamine(out) + Na(+)(out). Sodium-dependent lysophosphatidylcholine (LPC) symporter, which plays an essential role for blood-brain barrier formation and function. Specifically expressed in endothelium of the blood-brain barrier of micro-vessels and transports LPC into the brain. Transport of LPC is essential because it constitutes the major mechanism by which docosahexaenoic acid (DHA), an omega-3 fatty acid that is essential for normal brain growth and cognitive function, enters the brain. Transports LPC carrying long-chain fatty acids such LPC oleate and LPC palmitate with a minimum acyl chain length of 14 carbons. Does not transport docosahexaenoic acid in unesterified fatty acid. The sequence is that of Sodium-dependent lysophosphatidylcholine symporter 1-A (mfsd2aa) from Danio rerio (Zebrafish).